We begin with the raw amino-acid sequence, 261 residues long: Transmembrane protein 106A (261 aa).

The chain crosses the membrane as a helical span at residues 95–115 (VFLAVSICLVTSSLIIFFLFP).

The protein belongs to the TMEM106 family.

The protein localises to the cell membrane. Functionally, activates macrophages and polarizes them into M1-like macrophages through the activation of the MAPK and NF-kappaB signaling pathway. Upon activation, up-regulates the expression of CD80, CD86, CD69 and MHC II on macrophages, and induces the release of pro-inflammatory cytokines such as TNF, IL1B, IL6, CCL2 and nitric oxide. May play a role in inhibition of proliferation and migration. The protein is Transmembrane protein 106A (TMEM106A) of Bos taurus (Bovine).